The chain runs to 554 residues: Probable oligo-1,6-glucosidase 3 (554 aa).

Asp199 acts as the Nucleophile in catalysis. The active-site Proton donor is Glu256.

It belongs to the glycosyl hydrolase 13 family.

It localises to the cytoplasm. It catalyses the reaction Hydrolysis of (1-&gt;6)-alpha-D-glucosidic linkages in some oligosaccharides produced from starch and glycogen by alpha-amylase, and in isomaltose.. The polypeptide is Probable oligo-1,6-glucosidase 3 (yugT) (Bacillus subtilis (strain 168)).